The following is a 430-amino-acid chain: Bystin (430 aa).

2 stretches are compositionally biased toward basic residues: residues 1–12 (MGKDKKDRKHKG) and 26–35 (PSKRVKHRRE). Disordered regions lie at residues 1–45 (MGKD…ESFV) and 65–113 (MEEY…SETY). Basic and acidic residues predominate over residues 68–78 (YGFRKTGDRKT). Residues 93-104 (RIDDDDEDDSDD) are compositionally biased toward acidic residues.

Belongs to the bystin family.

Its subcellular location is the nucleus. The protein resides in the nucleolus. Its function is as follows. Required for processing of 20S pre-rRNA precursor and biogenesis of 40S ribosomal subunits. This chain is Bystin (bysl), found in Nematostella vectensis (Starlet sea anemone).